We begin with the raw amino-acid sequence, 107 residues long: UPF0145 protein YbjQ (107 aa).

The protein belongs to the UPF0145 family.

The sequence is that of UPF0145 protein YbjQ from Shigella flexneri.